The primary structure comprises 431 residues: Glutamyl-tRNA(Gln) amidotransferase subunit A (431 aa).

Catalysis depends on charge relay system residues K55 and S130. S154 acts as the Acyl-ester intermediate in catalysis.

It belongs to the amidase family. GatA subfamily. Heterotrimer of A, B and C subunits.

It catalyses the reaction L-glutamyl-tRNA(Gln) + L-glutamine + ATP + H2O = L-glutaminyl-tRNA(Gln) + L-glutamate + ADP + phosphate + H(+). Functionally, allows the formation of correctly charged Gln-tRNA(Gln) through the transamidation of misacylated Glu-tRNA(Gln) in organisms which lack glutaminyl-tRNA synthetase. The reaction takes place in the presence of glutamine and ATP through an activated gamma-phospho-Glu-tRNA(Gln). The sequence is that of Glutamyl-tRNA(Gln) amidotransferase subunit A from Methanococcus vannielii (strain ATCC 35089 / DSM 1224 / JCM 13029 / OCM 148 / SB).